The following is a 362-amino-acid chain: Major capsid protein VP1 (362 aa).

The Bipartite nuclear localization signal motif lies at 5-19 (KRKGECPGAAPKKPK). Threonine 338 is modified (phosphothreonine; by host).

This sequence belongs to the polyomaviruses coat protein VP1 family. Homomultimer; disulfide-linked. The virus capsid is composed of 72 icosahedral units, each one composed of five disulfide-linked copies of VP1. Interacts with minor capsid proteins VP2 and VP3.

The protein resides in the virion. Its subcellular location is the host nucleus. Functionally, forms an icosahedral capsid with a T=7 symmetry and a 40 nm diameter. The capsid is composed of 72 pentamers linked to each other by disulfide bonds and associated with VP2 or VP3 proteins. Interacts with sialic acids on the cell surface to provide virion attachment to target cell. Once attached, the virion is internalized by endocytosis and traffics to the endoplasmic reticulum. Inside the endoplasmic reticulum, the protein folding machinery isomerizes VP1 interpentamer disulfide bonds, thereby triggering initial uncoating. Next, the virion uses the endoplasmic reticulum-associated degradation machinery to probably translocate in the cytosol before reaching the nucleus. Nuclear entry of the viral DNA involves the selective exposure and importin recognition of VP2/Vp3 nuclear localization signal. In late phase of infection, neo-synthesized VP1 encapsulates replicated genomic DNA in the nucleus, and participates in rearranging nucleosomes around the viral DNA. The chain is Major capsid protein VP1 from Simian virus 12 (strain wt100) (SV-12).